A 276-amino-acid chain; its full sequence is MKGEYREQKSNEMFSKLPHHQQQQQQQQQQHSLTSHFHLSSTVTPTVDDSSIEVVRRPRGRPPGSKNKPKPPVFVTRDTDPPMSPYILEVPSGNDVVEAINRFCRRKSIGVCVLSGSGSVANVTLRQPSPAALGSTITFHGKFDLLSVSATFLPPPPRTSLSPPVSNFFTVSLAGPQGQIIGGFVAGPLISAGTVYVIAASFNNPSYHRLPAEEEQKHSAGTGEREGQSPPVSGGGEESGQMAGSGGESCGVSMYSCHMGGSDVIWAPTARAPPPY.

Over residues 1-10 (MKGEYREQKS) the composition is skewed to basic and acidic residues. 2 disordered regions span residues 1 to 80 (MKGE…RDTD) and 212 to 248 (AEEE…SGGE). Composition is skewed to low complexity over residues 20 to 31 (HQQQQQQQQQQH) and 40 to 49 (SSTVTPTVDD). The a.T hook DNA-binding region spans 56–68 (RRPRGRPPGSKNK). The region spanning 80–230 (DPPMSPYILE…GTGEREGQSP (151 aa)) is the PPC domain. The span at 212 to 227 (AEEEQKHSAGTGEREG) shows a compositional bias: basic and acidic residues. The span at 233-248 (SGGGEESGQMAGSGGE) shows a compositional bias: gly residues.

Its subcellular location is the nucleus. In terms of biological role, transcription factor that specifically binds AT-rich DNA sequences related to the nuclear matrix attachment regions (MARs). This chain is AT-hook motif nuclear-localized protein 17, found in Arabidopsis thaliana (Mouse-ear cress).